The sequence spans 189 residues: Phomopsin biosynthesis cluster protein D (189 aa).

Belongs to the oryJ family.

Functionally, part of the gene cluster that mediates the biosynthesis of the phomopsins, a group of hexapeptide mycotoxins which infects lupins and causes lupinosis disease in livestock. The role of phomC within the phomopsins biosynthesis pathway has still to be determined. The pathway starts with the processing of the precursor phomA by several endopeptidases including kexin proteases as well as the cluster-specific S41 family peptidase phomP1 and the oligopeptidase phomG to produce 10 identical copies of the hexapeptide Tyr-Val-Ile-Pro-Ile-Asp. After being excised from the precursor peptide, the core peptides are cyclized and modified post-translationally by enzymes encoded within the gene cluster. The timing and order of proteolysis of the phomA precursor and PTMs are still unknown. Two tyrosinase-like enzymes, phomQ1 and phomQ2, catalyze the chlorination and hydroxylation of Tyr, respectively. PhomYb, is proposed to be involved in the construction of the macrocyclic structure. The other 4 ustYa family proteins may be involved in PTMs that generate the unique structure of phomopsin A. PhomYa is required for the hydroxylation of C-beta of Tyr. PhomYc, phomYd, and phomYe are responsible for the biosynthesis of 2,3-dehydroisoleucine (dIle), 2,3-dehydroaspartic acid (dAsp), and 3,4-dehydroproline (dPro), respectively. While dIle formation by phomYc is indispensable for the installation of dAsp by phomYd, the order of the other PTMs have not been elucidated yet. Most of the biosynthetic enzymes likely have broad substrate specificity, and thus, there might be a metabolic grid from a precursor to phomopsin A. The enzyme(s) responsible for the biosynthesis of 3,4-dehydrovaline (dVal) have also not been identified yet. Finally, phomM acts as an S-adenosylmethionine-dependent alpha-N-methyltransferase that catalyzes two successive N-methylation reactions, converting N-desmethyl-phomopsin A to phomopsin A and phomopsin A further to an N,N-dimethylated congener called phomopsin E. The sequence is that of Phomopsin biosynthesis cluster protein D from Diaporthe leptostromiformis (Lupinosis disease fungus).